Reading from the N-terminus, the 307-residue chain is Acetaldehyde dehydrogenase (307 aa).

12 to 15 (SGNI) lines the NAD(+) pocket. The active-site Acyl-thioester intermediate is the C130. NAD(+) contacts are provided by residues 161-169 (SVGPGTRQN) and N272.

Belongs to the acetaldehyde dehydrogenase family.

It carries out the reaction acetaldehyde + NAD(+) + CoA = acetyl-CoA + NADH + H(+). In Shewanella pealeana (strain ATCC 700345 / ANG-SQ1), this protein is Acetaldehyde dehydrogenase.